Consider the following 1598-residue polypeptide: Transposon Ty2-LR2 Gag-Pol polyprotein (1598 aa).

3 stretches are compositionally biased toward polar residues: residues 1–11 (MESQQLHQNPH), 19–39 (ASVT…SASN), and 49–60 (KVNSQEETTPGT). 2 disordered regions span residues 1-88 (MESQ…YQQH) and 359-449 (QHSE…SNDE). Residues 295 to 397 (ENNINVSDRL…SSKPRAAKAH (103 aa)) form an RNA-binding region. Positions 369-381 (TSPNTTNTKVTTR) are enriched in low complexity. Polar residues-rich tracts occupy residues 399-408 (IATSSKFSRV) and 415-435 (ESTV…GQQQ). The active-site For protease activity; shared with dimeric partner is the D457. Positions 579–636 (NVNKSKSVNKYPYPLIHRMLGHANFRSIQKSLKKNAVTYLKESDIEWSNASTYQCPDC) are integrase-type zinc finger-like. Residues 656–831 (ESYEPFQYLH…AGLDITTILP (176 aa)) form the Integrase catalytic domain. Mg(2+) is bound by residues D667 and D732. Composition is skewed to polar residues over residues 915–927 (SFIE…QSYD), 1009–1034 (ESDT…STNE), and 1065–1082 (QRNS…STPS). Disordered stretches follow at residues 915 to 934 (SFIE…ESDH), 1004 to 1034 (MGGT…STNE), 1059 to 1135 (TEEP…KSSK), 1146 to 1165 (LPLP…VSKD), and 1170 to 1205 (HSRQ…TEIE). Residues 1151–1165 (LTHKSPTDTSDVSKD) are compositionally biased toward basic and acidic residues. Residues 1193–1227 (KKRSLEDNETEIEVSRDTWNNKNMRSLEPPRSKKR) carry the Bipartite nuclear localization signal motif. The Reverse transcriptase Ty1/copia-type domain maps to 1353–1491 (NDYYITQLDI…DILGLEIKYQ (139 aa)). The Mg(2+) site is built by D1361, D1442, and D1443.

In terms of assembly, the capsid protein forms a homotrimer, from which the VLPs are assembled. The protease is a homodimer, whose active site consists of two apposed aspartic acid residues. Post-translationally, initially, virus-like particles (VLPs) are composed of the structural unprocessed proteins Gag and Gag-Pol, and also contain the host initiator methionine tRNA (tRNA(i)-Met) which serves as a primer for minus-strand DNA synthesis, and a dimer of genomic Ty RNA. Processing of the polyproteins occurs within the particle and proceeds by an ordered pathway, called maturation. First, the protease (PR) is released by autocatalytic cleavage of the Gag-Pol polyprotein, and this cleavage is a prerequisite for subsequent processing at the remaining sites to release the mature structural and catalytic proteins. Maturation takes place prior to the RT reaction and is required to produce transposition-competent VLPs.

It is found in the cytoplasm. The protein resides in the nucleus. The enzyme catalyses DNA(n) + a 2'-deoxyribonucleoside 5'-triphosphate = DNA(n+1) + diphosphate. The catalysed reaction is Endonucleolytic cleavage to 5'-phosphomonoester.. Capsid protein (CA) is the structural component of the virus-like particle (VLP), forming the shell that encapsulates the retrotransposons dimeric RNA genome. The particles are assembled from trimer-clustered units and there are holes in the capsid shells that allow for the diffusion of macromolecules. CA also has nucleocapsid-like chaperone activity, promoting primer tRNA(i)-Met annealing to the multipartite primer-binding site (PBS), dimerization of Ty2 RNA and initiation of reverse transcription. Its function is as follows. The aspartyl protease (PR) mediates the proteolytic cleavages of the Gag and Gag-Pol polyproteins after assembly of the VLP. In terms of biological role, reverse transcriptase/ribonuclease H (RT) is a multifunctional enzyme that catalyzes the conversion of the retro-elements RNA genome into dsDNA within the VLP. The enzyme displays a DNA polymerase activity that can copy either DNA or RNA templates, and a ribonuclease H (RNase H) activity that cleaves the RNA strand of RNA-DNA heteroduplexes during plus-strand synthesis and hydrolyzes RNA primers. The conversion leads to a linear dsDNA copy of the retrotransposon that includes long terminal repeats (LTRs) at both ends. Functionally, integrase (IN) targets the VLP to the nucleus, where a subparticle preintegration complex (PIC) containing at least integrase and the newly synthesized dsDNA copy of the retrotransposon must transit the nuclear membrane. Once in the nucleus, integrase performs the integration of the dsDNA into the host genome. The protein is Transposon Ty2-LR2 Gag-Pol polyprotein (TY2B-LR2) of Saccharomyces cerevisiae (strain ATCC 204508 / S288c) (Baker's yeast).